A 556-amino-acid polypeptide reads, in one-letter code: Urocanate hydratase (556 aa).

Residues 52-53 (GG), Gln-130, 176-178 (GMG), Glu-196, Arg-201, 242-243 (NA), 263-267 (QTSAH), 273-274 (YL), and Tyr-322 each bind NAD(+). Cys-410 is a catalytic residue. NAD(+) is bound at residue Gly-492.

The protein belongs to the urocanase family. NAD(+) serves as cofactor.

Its subcellular location is the cytoplasm. It carries out the reaction 4-imidazolone-5-propanoate = trans-urocanate + H2O. It participates in amino-acid degradation; L-histidine degradation into L-glutamate; N-formimidoyl-L-glutamate from L-histidine: step 2/3. In terms of biological role, catalyzes the conversion of urocanate to 4-imidazolone-5-propionate. This chain is Urocanate hydratase, found in Shewanella oneidensis (strain ATCC 700550 / JCM 31522 / CIP 106686 / LMG 19005 / NCIMB 14063 / MR-1).